A 537-amino-acid polypeptide reads, in one-letter code: 2-isopropylmalate synthase (537 aa).

Residues 8–273 form the Pyruvate carboxyltransferase domain; that stretch reads IIIFDTTLRD…FLGRPVDSME (266 aa). Mn(2+) contacts are provided by aspartate 17, histidine 208, histidine 210, and asparagine 244. The interval 408 to 537 is regulatory domain; the sequence is RLELVQVSCG…PSEPVLTSKN (130 aa).

Belongs to the alpha-IPM synthase/homocitrate synthase family. LeuA type 1 subfamily. As to quaternary structure, homodimer. It depends on Mn(2+) as a cofactor.

It is found in the cytoplasm. The enzyme catalyses 3-methyl-2-oxobutanoate + acetyl-CoA + H2O = (2S)-2-isopropylmalate + CoA + H(+). Its pathway is amino-acid biosynthesis; L-leucine biosynthesis; L-leucine from 3-methyl-2-oxobutanoate: step 1/4. In terms of biological role, catalyzes the condensation of the acetyl group of acetyl-CoA with 3-methyl-2-oxobutanoate (2-ketoisovalerate) to form 3-carboxy-3-hydroxy-4-methylpentanoate (2-isopropylmalate). The polypeptide is 2-isopropylmalate synthase (Crocosphaera subtropica (strain ATCC 51142 / BH68) (Cyanothece sp. (strain ATCC 51142))).